The chain runs to 157 residues: Small ribosomal subunit protein uS7 (157 aa).

It belongs to the universal ribosomal protein uS7 family. Part of the 30S ribosomal subunit. Contacts proteins S9 and S11.

Functionally, one of the primary rRNA binding proteins, it binds directly to 16S rRNA where it nucleates assembly of the head domain of the 30S subunit. Is located at the subunit interface close to the decoding center, probably blocks exit of the E-site tRNA. The sequence is that of Small ribosomal subunit protein uS7 from Paracidovorax citrulli (strain AAC00-1) (Acidovorax citrulli).